A 476-amino-acid chain; its full sequence is Raffinose invertase (476 aa).

Substrate is bound by residues 35–38, Q54, 97–98, 159–160, E214, and W297; these read WMND, FS, and RD. D38 is an active-site residue.

It belongs to the glycosyl hydrolase 32 family. Homodimer.

It carries out the reaction Hydrolysis of terminal non-reducing beta-D-fructofuranoside residues in beta-D-fructofuranosides.. Its function is as follows. May prevent the potential hasard of excessive sucrose accumulation. The chain is Raffinose invertase (rafD) from Escherichia coli.